Reading from the N-terminus, the 202-residue chain is Small ribosomal subunit protein uS4 (202 aa).

Residues 23 to 42 are disordered; the sequence is RKNARRAYAPGQHGQARKKR. The 64-residue stretch at 90–153 folds into the S4 RNA-binding domain; sequence MRLDNTVFRL…RSQDLVKRNM (64 aa).

The protein belongs to the universal ribosomal protein uS4 family. Part of the 30S ribosomal subunit. Contacts protein S5. The interaction surface between S4 and S5 is involved in control of translational fidelity.

One of the primary rRNA binding proteins, it binds directly to 16S rRNA where it nucleates assembly of the body of the 30S subunit. Its function is as follows. With S5 and S12 plays an important role in translational accuracy. This chain is Small ribosomal subunit protein uS4, found in Microcystis aeruginosa (strain NIES-843 / IAM M-2473).